Consider the following 194-residue polypeptide: Imidazoleglycerol-phosphate dehydratase (194 aa).

Belongs to the imidazoleglycerol-phosphate dehydratase family.

It localises to the cytoplasm. It catalyses the reaction D-erythro-1-(imidazol-4-yl)glycerol 3-phosphate = 3-(imidazol-4-yl)-2-oxopropyl phosphate + H2O. It participates in amino-acid biosynthesis; L-histidine biosynthesis; L-histidine from 5-phospho-alpha-D-ribose 1-diphosphate: step 6/9. This is Imidazoleglycerol-phosphate dehydratase from Caldicellulosiruptor bescii (strain ATCC BAA-1888 / DSM 6725 / KCTC 15123 / Z-1320) (Anaerocellum thermophilum).